Consider the following 160-residue polypeptide: MRCPNCNSLDTQVKDSRPTEDSSVIRRRRVCVACNFRFTTFERVQLRELTVIKRNGRRVPFDRDKLMRSVQISLRKRQVEPERVEKMVSTIVRELETGGEAEISSEVIGETVMEHLRTLDDVAYVRFASVYRNFREAKDFADVLGELSGEEEARLAAIRK.

Positions 1 to 11 are enriched in polar residues; it reads MRCPNCNSLDT. Residues 1–20 form a disordered region; that stretch reads MRCPNCNSLDTQVKDSRPTE. The segment at 3–34 is a zinc-finger region; it reads CPNCNSLDTQVKDSRPTEDSSVIRRRRVCVAC. An ATP-cone domain is found at 49–139; sequence LTVIKRNGRR…VYRNFREAKD (91 aa).

It belongs to the NrdR family. The cofactor is Zn(2+).

Functionally, negatively regulates transcription of bacterial ribonucleotide reductase nrd genes and operons by binding to NrdR-boxes. The polypeptide is Transcriptional repressor NrdR (Bradyrhizobium diazoefficiens (strain JCM 10833 / BCRC 13528 / IAM 13628 / NBRC 14792 / USDA 110)).